A 459-amino-acid polypeptide reads, in one-letter code: Tryptophan synthase beta chain (459 aa).

Residue lysine 121 is modified to N6-(pyridoxal phosphate)lysine.

It belongs to the TrpB family. Tetramer of two alpha and two beta chains. The cofactor is pyridoxal 5'-phosphate.

It carries out the reaction (1S,2R)-1-C-(indol-3-yl)glycerol 3-phosphate + L-serine = D-glyceraldehyde 3-phosphate + L-tryptophan + H2O. It participates in amino-acid biosynthesis; L-tryptophan biosynthesis; L-tryptophan from chorismate: step 5/5. In terms of biological role, the beta subunit is responsible for the synthesis of L-tryptophan from indole and L-serine. The chain is Tryptophan synthase beta chain (trpB) from Pyrococcus horikoshii (strain ATCC 700860 / DSM 12428 / JCM 9974 / NBRC 100139 / OT-3).